Here is a 274-residue protein sequence, read N- to C-terminus: Glutamate racemase (274 aa).

Substrate-binding positions include 9-10 (DS) and 41-42 (YG). The active-site Proton donor/acceptor is cysteine 73. 74–75 (NT) lines the substrate pocket. Cysteine 183 serves as the catalytic Proton donor/acceptor. Residue 184-185 (TH) participates in substrate binding.

Belongs to the aspartate/glutamate racemases family.

The catalysed reaction is L-glutamate = D-glutamate. It functions in the pathway cell wall biogenesis; peptidoglycan biosynthesis. Its function is as follows. Provides the (R)-glutamate required for cell wall biosynthesis. This Shewanella baltica (strain OS223) protein is Glutamate racemase.